A 107-amino-acid chain; its full sequence is MKYLAAYALVGLSGGTPSKSAVEAVLKAAGVPVDPSRVDALFAEFAGKDFDTVCTEGKSKLVGGVTRPNAATASAPTAAAAASSGAAAPAAAAEEEEDDDMGFGLFD.

Residues 85–107 are disordered; the sequence is GAAAPAAAAEEEEDDDMGFGLFD.

It belongs to the eukaryotic ribosomal protein P1/P2 family. P1 and P2 exist as dimers at the large ribosomal subunit. Phosphorylated.

Its function is as follows. Plays an important role in the elongation step of protein synthesis. This Trypanosoma cruzi protein is Large ribosomal subunit protein P2-A.